Here is a 188-residue protein sequence, read N- to C-terminus: Large ribosomal subunit protein uL6 (188 aa).

The protein belongs to the universal ribosomal protein uL6 family.

This chain is Large ribosomal subunit protein uL6 (RPL9), found in Tetrahymena thermophila (strain SB210).